Reading from the N-terminus, the 313-residue chain is Ornithine carbamoyltransferase (313 aa).

Carbamoyl phosphate-binding positions include 57–60, Q84, R108, and 135–138; these read STRT and HPTQ. L-ornithine-binding positions include N167, D231, and 235–236; that span reads SM. Carbamoyl phosphate contacts are provided by residues 272–273 and R300; that span reads CL.

Belongs to the aspartate/ornithine carbamoyltransferase superfamily. OTCase family.

The protein localises to the cytoplasm. It carries out the reaction carbamoyl phosphate + L-ornithine = L-citrulline + phosphate + H(+). It participates in amino-acid biosynthesis; L-arginine biosynthesis; L-arginine from L-ornithine and carbamoyl phosphate: step 1/3. Functionally, reversibly catalyzes the transfer of the carbamoyl group from carbamoyl phosphate (CP) to the N(epsilon) atom of ornithine (ORN) to produce L-citrulline. This is Ornithine carbamoyltransferase from Pseudothermotoga lettingae (strain ATCC BAA-301 / DSM 14385 / NBRC 107922 / TMO) (Thermotoga lettingae).